Consider the following 333-residue polypeptide: Phosphoribosylformylglycinamidine cyclo-ligase (333 aa).

Belongs to the AIR synthase family.

The protein resides in the cytoplasm. It catalyses the reaction 2-formamido-N(1)-(5-O-phospho-beta-D-ribosyl)acetamidine + ATP = 5-amino-1-(5-phospho-beta-D-ribosyl)imidazole + ADP + phosphate + H(+). Its pathway is purine metabolism; IMP biosynthesis via de novo pathway; 5-amino-1-(5-phospho-D-ribosyl)imidazole from N(2)-formyl-N(1)-(5-phospho-D-ribosyl)glycinamide: step 2/2. This Methanosarcina acetivorans (strain ATCC 35395 / DSM 2834 / JCM 12185 / C2A) protein is Phosphoribosylformylglycinamidine cyclo-ligase.